The sequence spans 258 residues: Tryptophan synthase alpha chain (258 aa).

Active-site proton acceptor residues include Glu-47 and Asp-58.

It belongs to the TrpA family. Tetramer of two alpha and two beta chains.

It catalyses the reaction (1S,2R)-1-C-(indol-3-yl)glycerol 3-phosphate + L-serine = D-glyceraldehyde 3-phosphate + L-tryptophan + H2O. It participates in amino-acid biosynthesis; L-tryptophan biosynthesis; L-tryptophan from chorismate: step 5/5. Its function is as follows. The alpha subunit is responsible for the aldol cleavage of indoleglycerol phosphate to indole and glyceraldehyde 3-phosphate. The sequence is that of Tryptophan synthase alpha chain from Bacillus anthracis (strain CDC 684 / NRRL 3495).